Here is a 264-residue protein sequence, read N- to C-terminus: Carbonic anhydrase 7 (264 aa).

In terms of domain architecture, Alpha-carbonic anhydrase spans 5-262 (HGWGYGQDDG…LKGRVVKASF (258 aa)). Histidine 66 (proton donor/acceptor) is an active-site residue. 3 residues coordinate Zn(2+): histidine 96, histidine 98, and histidine 121. 201–202 (TT) serves as a coordination point for substrate.

The protein belongs to the alpha-carbonic anhydrase family. Zn(2+) is required as a cofactor.

The protein resides in the cytoplasm. The catalysed reaction is hydrogencarbonate + H(+) = CO2 + H2O. Its activity is regulated as follows. Activated by histamine, L-adrenaline, L- and D-histidine, and L- and D-phenylalanine. Inhibited by coumarins, sulfonamide derivatives such as acetazolamide (AZA), by saccharin and Foscarnet (phosphonoformate trisodium salt). Functionally, reversible hydration of carbon dioxide. The chain is Carbonic anhydrase 7 (CA7) from Homo sapiens (Human).